The primary structure comprises 347 residues: GMP reductase (347 aa).

Position 108 to 131 (Asn-108 to Ala-131) interacts with NADP(+). Positions 181 and 183 each coordinate K(+). The active-site Thioimidate intermediate is Cys-186. Ile-216–Val-239 contributes to the NADP(+) binding site.

The protein belongs to the IMPDH/GMPR family. GuaC type 1 subfamily. Homotetramer.

The catalysed reaction is IMP + NH4(+) + NADP(+) = GMP + NADPH + 2 H(+). Catalyzes the irreversible NADPH-dependent deamination of GMP to IMP. It functions in the conversion of nucleobase, nucleoside and nucleotide derivatives of G to A nucleotides, and in maintaining the intracellular balance of A and G nucleotides. This Tolumonas auensis (strain DSM 9187 / NBRC 110442 / TA 4) protein is GMP reductase.